The chain runs to 575 residues: Serine/threonine-protein kinase Pink1, mitochondrial (575 aa).

The transit peptide at 1–51 (MSLLAYTNLLLQNGRIFRYYKKANIKKFIKKIIKLDLKSTPSEASVSRQTF) directs the protein to the mitochondrion. At 52–94 (LSTGLNSVKNAVQLQARKLLINNVLERVTPTLNSDLKKKAAKR) the chain is on the mitochondrial intermembrane side. Residues 95–118 (LFYGDSAPFFALVGVSLASGSGLL) form a helical membrane-spanning segment. At 119-575 (TKDDELEGIC…KWIQELHIYN (457 aa)) the chain is on the cytoplasmic side. K193 contacts ATP. Phosphoserine; by autocatalysis is present on residues S202 and S204. Position 214 (E214) interacts with Mg(2+). T305 carries the post-translational modification Phosphothreonine; by autocatalysis. The active-site Proton acceptor is the D334. Mg(2+) contacts are provided by N339 and D357.

Belongs to the protein kinase superfamily. Ser/Thr protein kinase family. Mg(2+) is required as a cofactor. In terms of processing, proteolytically cleaved. In healthy cells, the precursor is continuously imported into mitochondria where it is proteolytically cleaved into its short form by the mitochondrial rhomboid protease rho-7 (8231301). The short form is then released into the cytosol where it rapidly undergoes proteasome-dependent degradation. In unhealthy cells, when cellular stress conditions lead to the loss of mitochondrial membrane potential, mitochondrial import is impaired leading to the precursor accumulating on the outer mitochondrial membrane (OMM). Autophosphorylated. Autophosphorylated on Ser-202, which activates kinase activity. Loss of mitochondrial membrane potential results in the precursor accumulating on the outer mitochondrial membrane (OMM) where it is activated by autophosphorylation at Ser-202. Autophosphorylation is sufficient and essential for selective recruitment of park to depolarized mitochondria, likely via Pink1-dependent phosphorylation of polyubiquitin chains. Also autophosphorylated at Ser-204 and Thr-305.

The protein localises to the mitochondrion outer membrane. The protein resides in the mitochondrion inner membrane. It is found in the cytoplasm. Its subcellular location is the cytosol. It carries out the reaction L-seryl-[protein] + ATP = O-phospho-L-seryl-[protein] + ADP + H(+). The enzyme catalyses L-threonyl-[protein] + ATP = O-phospho-L-threonyl-[protein] + ADP + H(+). Its function is as follows. Acts as a serine/threonine-protein kinase. Exhibits a substrate preference for proline at position P+1 and a general preference at several residues for basic residues such as arginine. Also exhibits moderate preferences for a phosphotyrosine at position P-3 and a tryptophan at P-5. Critical to mitochondrial homeostasis it mediates several pathways that maintain mitochondrial health and function Protects against mitochondrial dysfunction during cellular stress by phosphorylating mitochondrial proteins such as park and likely Drp1, to coordinate mitochondrial quality control mechanisms that remove and replace dysfunctional mitochondrial components. Depending on the severity of mitochondrial damage and/or dysfunction, activity ranges from preventing apoptosis and stimulating mitochondrial biogenesis to regulating mitochondrial dynamics and eliminating severely damaged mitochondria via mitophagy. Appears to be particularly important in maintaining the physiology and function of cells with high energy demands that are undergoing stress or altered metabolic environment, including spermatids, muscle cells and neurons such as the dopaminergic (DA) neurons. Mediates the translocation and activation of park at the outer membrane (OMM) of dysfunctional/depolarized mitochondria. At the OMM of damaged mitochondria, phosphorylates pre-existing polyubiquitin chains, the Pink1-phosphorylated polyubiquitin then recruits park from the cytosol to the OMM where park is fully activated by phosphorylation at 'Ser-94' by Pink1. When cellular stress results in irreversible mitochondrial damage, functions with park to promote the clearance of dysfunctional and/or depolarized mitochondria by selective autophagy (mitophagy). The Pink1-park pathway also promotes fission and/or inhibits fusion of damaged mitochondria, by phosphorylating and thus promoting the park-dependent degradation of proteins involved in mitochondrial fusion/fission such as Marf, Opa1 and fzo. This prevents the refusion of unhealthy mitochondria with the mitochondrial network or initiates mitochondrial fragmentation facilitating their later engulfment by autophagosomes. Also likely to promote mitochondrial fission independently of park and Atg7-mediated mitophagy, via the phosphorylation and activation of Drp1. Regulates motility of damaged mitochondria by phosphorylating Miro which likely promotes its park-dependent degradation by the proteasome; in motor neurons, this inhibits mitochondrial intracellular anterograde transport along the axons which probably increases the chance of the mitochondria being eliminated in the soma. The Pink1-park pathway is also involved in mitochondrial regeneration processes such as promoting mitochondrial biogenesis, activating localized mitochondrial repair, promoting selective turnover of mitochondrial proteins and initiating the mitochondrial import of endogenous proteins. Involved in mitochondrial biogenesis by promoting the park-dependent ubiquitination of transcriptional repressor Paris which leads to its subsequent proteasomal degradation and allows activation of the transcription factor srl. Functions with park to promote localized mitochondrial repair by activating the translation of specific nuclear-encoded mitochondrial RNAs (nc-mtRNAs) on the mitochondrial surface, including several key electron transport chain component nc-mtRNAs. During oogenesis, phosphorylates and inactivates larp on the membrane of defective mitochondria, thus impairing local translation and mtDNA replication and consequently, reducing transmission of deleterious mtDNA mutations to the mature oocyte. Phosphorylates the mitochondrial acyl-CoA dehydrogenase Mcad, and appears to be important for maintaining fatty acid and amino acid metabolism via a mechanism that is independent of it's role in maintaining production of ATP. The protein is Serine/threonine-protein kinase Pink1, mitochondrial of Pediculus humanus subsp. corporis (Body louse).